Reading from the N-terminus, the 53-residue chain is Mannose/glucose-specific lectin alpha 2 chain (53 aa).

This sequence belongs to the leguminous lectin family. Tetramer of two alpha and two beta chains.

In Lathyrus ochrus (Cyprus-vetch), this protein is Mannose/glucose-specific lectin alpha 2 chain.